The chain runs to 244 residues: UPF0280 protein Msp_1322 (244 aa).

This sequence belongs to the UPF0280 family.

This Methanosphaera stadtmanae (strain ATCC 43021 / DSM 3091 / JCM 11832 / MCB-3) protein is UPF0280 protein Msp_1322.